Reading from the N-terminus, the 300-residue chain is Ribosomal RNA small subunit methyltransferase H (300 aa).

S-adenosyl-L-methionine-binding positions include 46–48 (GGH), aspartate 65, phenylalanine 92, aspartate 107, and glutamine 114.

The protein belongs to the methyltransferase superfamily. RsmH family.

The protein localises to the cytoplasm. It catalyses the reaction cytidine(1402) in 16S rRNA + S-adenosyl-L-methionine = N(4)-methylcytidine(1402) in 16S rRNA + S-adenosyl-L-homocysteine + H(+). Functionally, specifically methylates the N4 position of cytidine in position 1402 (C1402) of 16S rRNA. This Prochlorococcus marinus (strain MIT 9215) protein is Ribosomal RNA small subunit methyltransferase H.